An 802-amino-acid chain; its full sequence is Peptidyl serine alpha-galactosyltransferase (802 aa).

Positions 1–19 (MRWDLITAIVAALVVSVLA) are cleaved as a signal peptide. Topologically, residues 20–750 (DESGQMAPYR…SEGRFSTLKL (731 aa)) are extracellular. N-linked (GlcNAc...) asparagine glycans are attached at residues N214, N275, N425, and N637. Residues 699-741 (RNCPEPGSESTEKISVSRKVGNIETKQTQGSDETKESSGSSES) form a disordered region. A helical transmembrane segment spans residues 751–771 (WVIALWLISGVGFLVVMLLVF). The Cytoplasmic segment spans residues 772–802 (STRRGRGTTRGKGYRNKRRTSYSNTGFLDTK). Positions 777 to 791 (RGTTRGKGYRNKRRT) are enriched in basic residues. The interval 777–802 (RGTTRGKGYRNKRRTSYSNTGFLDTK) is disordered. Over residues 792–802 (SYSNTGFLDTK) the composition is skewed to polar residues.

It localises to the endoplasmic reticulum membrane. Functionally, glycosyltransferase involved in the O-galactosylation of several proteins including extensins. Catalyzes the transfer of alpha-galactosyl to Ser residues. Hydroxylation of proline residues adjacent to the serine acceptor is required for activity. This is Peptidyl serine alpha-galactosyltransferase from Arabidopsis thaliana (Mouse-ear cress).